Here is a 370-residue protein sequence, read N- to C-terminus: Ganglioside-induced differentiation-associated protein 1-like 1 (370 aa).

The GST N-terminal domain occupies 45-129; it reads ESLVLYHWTQ…YVERTFTGEH (85 aa). The 168-residue stretch at 177–344 folds into the GST C-terminal domain; sequence PKYATAEIRR…RLVKRKPPSF (168 aa).

This sequence belongs to the GST superfamily.

The polypeptide is Ganglioside-induced differentiation-associated protein 1-like 1 (Gdap1l1) (Mus musculus (Mouse)).